The chain runs to 276 residues: Ribosomal RNA small subunit methyltransferase A (276 aa).

S-adenosyl-L-methionine contacts are provided by N27, L29, G54, E75, D101, and N123.

This sequence belongs to the class I-like SAM-binding methyltransferase superfamily. rRNA adenine N(6)-methyltransferase family. RsmA subfamily.

It is found in the cytoplasm. It carries out the reaction adenosine(1518)/adenosine(1519) in 16S rRNA + 4 S-adenosyl-L-methionine = N(6)-dimethyladenosine(1518)/N(6)-dimethyladenosine(1519) in 16S rRNA + 4 S-adenosyl-L-homocysteine + 4 H(+). In terms of biological role, specifically dimethylates two adjacent adenosines (A1518 and A1519) in the loop of a conserved hairpin near the 3'-end of 16S rRNA in the 30S particle. May play a critical role in biogenesis of 30S subunits. This is Ribosomal RNA small subunit methyltransferase A from Bartonella bacilliformis (strain ATCC 35685 / KC583 / Herrer 020/F12,63).